Consider the following 446-residue polypeptide: Exodeoxyribonuclease 7 large subunit (446 aa).

This sequence belongs to the XseA family. As to quaternary structure, heterooligomer composed of large and small subunits.

It localises to the cytoplasm. It catalyses the reaction Exonucleolytic cleavage in either 5'- to 3'- or 3'- to 5'-direction to yield nucleoside 5'-phosphates.. In terms of biological role, bidirectionally degrades single-stranded DNA into large acid-insoluble oligonucleotides, which are then degraded further into small acid-soluble oligonucleotides. This Streptococcus pneumoniae (strain Taiwan19F-14) protein is Exodeoxyribonuclease 7 large subunit.